A 328-amino-acid chain; its full sequence is Formimidoylglutamase (328 aa).

The Mn(2+) site is built by His-133, Asp-159, His-161, Asp-163, Asp-253, and Asp-255.

This sequence belongs to the arginase family. It depends on Mn(2+) as a cofactor.

It catalyses the reaction N-formimidoyl-L-glutamate + H2O = formamide + L-glutamate. It participates in amino-acid degradation; L-histidine degradation into L-glutamate; L-glutamate from N-formimidoyl-L-glutamate (hydrolase route): step 1/1. In terms of biological role, catalyzes the conversion of N-formimidoyl-L-glutamate to L-glutamate and formamide. This chain is Formimidoylglutamase, found in Streptococcus pyogenes serotype M28 (strain MGAS6180).